We begin with the raw amino-acid sequence, 136 residues long: Histone H3.Y (136 aa).

A compositionally biased stretch (low complexity) spans 1–16; it reads MARTKQTARKATAWQA. A disordered region spans residues 1–43; sequence MARTKQTARKATAWQAPRKPLATKAAGKRAPPTGGIKKPHRYK. Residue Arg3 is modified to Asymmetric dimethylarginine. A Citrulline; alternate modification is found at Arg3. Thr4 carries the phosphothreonine modification. An Allysine; alternate modification is found at Lys5. Lys5 bears the N6,N6,N6-trimethyllysine; alternate mark. Lys5 carries the post-translational modification N6,N6-dimethyllysine; alternate. N6-(2-hydroxyisobutyryl)lysine; alternate is present on Lys5. Position 5 is an N6-(beta-hydroxybutyryl)lysine; alternate (Lys5). N6-acetyllysine; alternate is present on Lys5. Lys5 bears the N6-crotonyllysine; alternate mark. Lys5 is modified (N6-methyllysine; alternate). Residue Gln6 is modified to 5-glutamyl dopamine; alternate. Gln6 carries the post-translational modification 5-glutamyl serotonin; alternate. Thr7 carries the phosphothreonine modification. Arg9 is subject to Citrulline; alternate. A Symmetric dimethylarginine modification is found at Arg9. Lys10 is modified (N6,N6,N6-trimethyllysine; alternate). N6,N6-dimethyllysine; alternate is present on Lys10. Position 10 is an N6-(2-hydroxyisobutyryl)lysine; alternate (Lys10). Residue Lys10 is modified to N6-(beta-hydroxybutyryl)lysine; alternate. Residue Lys10 is modified to N6-acetyllysine; alternate. Lys10 is modified (N6-crotonyllysine; alternate). Lys10 carries the N6-methyllysine; alternate modification. Lys10 carries the post-translational modification N6-butyryllysine; alternate. Residue Lys10 is modified to N6-lactoyllysine; alternate. At Thr12 the chain carries Phosphothreonine. Asymmetric dimethylarginine is present on Arg18. Arg18 is modified (citrulline; alternate). 4 positions are modified to N6-(2-hydroxyisobutyryl)lysine; alternate: Lys19, Lys24, Lys28, and Lys37. 3 positions are modified to N6-(beta-hydroxybutyryl)lysine; alternate: Lys19, Lys24, and Lys28. An N6-acetyllysine; alternate mark is found at Lys19, Lys24, Lys28, and Lys37. An N6-crotonyllysine; alternate mark is found at Lys19, Lys24, and Lys28. An N6-methyllysine; alternate mark is found at Lys19, Lys24, Lys28, and Lys37. 2 positions are modified to N6-butyryllysine; alternate: Lys19 and Lys24. N6-lactoyllysine; alternate occurs at positions 19, 24, and 28. An N6-glutaryllysine; alternate mark is found at Lys19, Lys24, and Lys28. An N6,N6,N6-trimethyllysine; alternate mark is found at Lys28 and Lys37. Lys28 and Lys37 each carry N6,N6-dimethyllysine; alternate. The residue at position 38 (Lys38) is an N6-methyllysine. The residue at position 42 (Tyr42) is a Phosphotyrosine. Position 57 is an N6,N6,N6-trimethyllysine; alternate (Lys57). Lys57 carries the post-translational modification N6-(2-hydroxyisobutyryl)lysine; alternate. At Lys57 the chain carries N6-(beta-hydroxybutyryl)lysine; alternate. Lys57 is modified (N6-acetyllysine; alternate). Lys57 bears the N6-crotonyllysine; alternate mark. An N6-lactoyllysine; alternate modification is found at Lys57. Lys57 carries the post-translational modification N6-glutaryllysine; alternate. Lys57 is modified (N6-methyllysine). Lys57 is subject to N6-succinyllysine; alternate. Ser58 is subject to Phosphoserine. Lys65 carries the N6-(2-hydroxyisobutyryl)lysine; alternate modification. Lys65 is modified (N6-methyllysine; alternate). Ser87 is subject to Phosphoserine. At Thr108 the chain carries Phosphothreonine.

It belongs to the histone H3 family. In terms of assembly, the nucleosome is a histone octamer containing two molecules each of H2A, H2B, H3 and H4 assembled in one H3-H4 heterotetramer and two H2A-H2B heterodimers. The octamer wraps approximately 147 bp of DNA. Interacts with HIRA, a chaperone required for its incorporation into nucleosomes. Does not interact with DAXX chaperone. Acetylation is generally linked to gene activation. Acetylation on Lys-10 (H3K9ac) impairs methylation at Arg-9 (H3R8me2s). Acetylation on Lys-19 (H3K18ac) and Lys-24 (H3K24ac) favors methylation at Arg-18 (H3R17me). In terms of processing, citrullination at Arg-9 (H3R8ci) and/or Arg-18 (H3R17ci) impairs methylation and represses transcription. Post-translationally, asymmetric dimethylation at Arg-18 (H3R17me2a) is linked to gene activation. Symmetric dimethylation at Arg-9 (H3R8me2s) is linked to gene repression. Asymmetric dimethylation at Arg-3 (H3R2me2a) is linked to gene repression and is mutually exclusive with H3 Lys-5 methylation (H3K4me2 and H3K4me3). H3R2me2a is present at the 3' of genes regardless of their transcription state and is enriched on inactive promoters, while it is absent on active promoters. Methylation at Lys-5 (H3K4me) facilitates subsequent acetylation of H3 and H4. Methylation at Lys-10 (H3K9me) and Lys-28 (H3K27me), which are linked to gene repression, are underrepresented. Methylation at Lys-10 (H3K9me) is a specific target for HP1 proteins (CBX1, CBX3 and CBX5) and prevents subsequent acetylation of H3 and H4. In terms of processing, phosphorylation at Thr-7 (H3T6ph) is a specific tag for epigenetic transcriptional activation that prevents demethylation of Lys-5 (H3K4me) by LSD1/KDM1A. At centromeres, specifically phosphorylated at Thr-12 (H3T11ph) from prophase to early anaphase. Phosphorylation at Thr-12 (H3T11ph) is a specific tag for epigenetic transcriptional activation that promotes demethylation of Lys-10 (H3K9me). Phosphorylation at Tyr-42 (H3Y41ph) promotes exclusion of CBX5 (HP1 alpha) from chromatin. Post-translationally, lysine deamination at Lys-5 (H3K4all) to form allysine. Allysine formation only takes place on H3K4me3 and results in gene repression. Crotonylation (Kcr) is specifically present in male germ cells and marks testis-specific genes in post-meiotic cells, including X-linked genes that escape sex chromosome inactivation in haploid cells. Crotonylation marks active promoters and enhancers and confers resistance to transcriptional repressors. It is also associated with post-meiotically activated genes on autosomes. In terms of processing, butyrylation of histones marks active promoters and competes with histone acetylation. It is present during late spermatogenesis. In terms of tissue distribution, expressed at low level in some tissues, such as testis and brain.

The protein resides in the nucleus. Its subcellular location is the chromosome. In terms of biological role, primate-specific variant histone H3, which constitutes a core component of nucleosomes. Histone H3.Y-containing nucleosomes accumulate around transcription start sites and have flexible DNA ends, suggesting that they form relaxed chromatin that allows transcription factor access. Histone H1 binds less efficiently to histone H3.Y-containing nucleosomes. Nucleosomes wrap and compact DNA into chromatin, limiting DNA accessibility to the cellular machineries which require DNA as a template. Histones thereby play a central role in transcription regulation, DNA repair, DNA replication and chromosomal stability. DNA accessibility is regulated via a complex set of post-translational modifications of histones, also called histone code, and nucleosome remodeling. This is Histone H3.Y from Homo sapiens (Human).